Here is a 215-residue protein sequence, read N- to C-terminus: Probable phosphoglycerate mutase GpmB (215 aa).

Substrate is bound by residues 8–15, 21–22, Arg58, Arg60, 82–85, 104–105, and 151–152; these read RHGETQWN, QG, ELDM, RR, and GI. His9 functions as the Tele-phosphohistidine intermediate in the catalytic mechanism. Catalysis depends on Glu82, which acts as the Proton donor/acceptor.

Belongs to the phosphoglycerate mutase family. GpmB subfamily.

It carries out the reaction (2R)-2-phosphoglycerate = (2R)-3-phosphoglycerate. Its pathway is carbohydrate degradation; glycolysis; pyruvate from D-glyceraldehyde 3-phosphate: step 3/5. The protein is Probable phosphoglycerate mutase GpmB of Klebsiella pneumoniae (strain 342).